Reading from the N-terminus, the 204-residue chain is Ribonuclease HII (204 aa).

The region spanning 14-203 is the RNase H type-2 domain; that stretch reads VGLCGVDEAG…VRLLLDQTSL (190 aa). A divalent metal cation is bound by residues D20, E21, and D112.

The protein belongs to the RNase HII family. The cofactor is Mn(2+). Requires Mg(2+) as cofactor.

The protein localises to the cytoplasm. The catalysed reaction is Endonucleolytic cleavage to 5'-phosphomonoester.. Its function is as follows. Endonuclease that specifically degrades the RNA of RNA-DNA hybrids. This chain is Ribonuclease HII, found in Thiobacillus denitrificans (strain ATCC 25259 / T1).